We begin with the raw amino-acid sequence, 147 residues long: Succinate dehydrogenase assembly factor 2, mitochondrial (147 aa).

It belongs to the SDHAF2 family. Interacts with the flavoprotein subunit within the SDH catalytic dimer.

It localises to the mitochondrion matrix. Functionally, plays an essential role in the assembly of succinate dehydrogenase (SDH), an enzyme complex (also referred to as respiratory complex II) that is a component of both the tricarboxylic acid (TCA) cycle and the mitochondrial electron transport chain, and which couples the oxidation of succinate to fumarate with the reduction of ubiquinone (coenzyme Q) to ubiquinol. Required for flavinylation (covalent attachment of FAD) of the flavoprotein subunit of the SDH catalytic dimer. In Drosophila grimshawi (Hawaiian fruit fly), this protein is Succinate dehydrogenase assembly factor 2, mitochondrial.